An 88-amino-acid polypeptide reads, in one-letter code: Large ribosomal subunit protein bL27 (88 aa).

Residues 1 to 25 are disordered; that stretch reads MAHKKGASSSRNGRDSNAQRLGVKR. Positions 7 to 19 are enriched in polar residues; the sequence is ASSSRNGRDSNAQ.

Belongs to the bacterial ribosomal protein bL27 family.

The sequence is that of Large ribosomal subunit protein bL27 from Nocardia farcinica (strain IFM 10152).